Consider the following 210-residue polypeptide: MSGFQAQLILLSLVSYVIGSIPFGLLLTAVAGGGDIRKIGSGNIGATNVLRTGRRGLAAATLLLDALKGALAVLIARFFFPGASETTMAVAAVAVVIGHCFPVWLGFRGGKGVATGLGTIWVLCWPVGLACCVVWLLVARLSRISSAGALAAFLLAPGLMVLLSGRPLHTPIPVATLLISLLIWARHSSNIARLVTGREPRVKVDQASRR.

6 helical membrane-spanning segments follow: residues Leu8–Thr28, Gly56–Ala76, Thr87–Phe107, Thr119–Ala139, Ile144–Ser164, and Gly165–Ala185.

Belongs to the PlsY family. As to quaternary structure, probably interacts with PlsX.

The protein localises to the cell inner membrane. The catalysed reaction is an acyl phosphate + sn-glycerol 3-phosphate = a 1-acyl-sn-glycero-3-phosphate + phosphate. It functions in the pathway lipid metabolism; phospholipid metabolism. Functionally, catalyzes the transfer of an acyl group from acyl-phosphate (acyl-PO(4)) to glycerol-3-phosphate (G3P) to form lysophosphatidic acid (LPA). This enzyme utilizes acyl-phosphate as fatty acyl donor, but not acyl-CoA or acyl-ACP. The protein is Glycerol-3-phosphate acyltransferase of Gluconobacter oxydans (strain 621H) (Gluconobacter suboxydans).